The chain runs to 297 residues: MHKRLKIYSVITSIGVLIVLLQGALVTKTGSGEGCGATWPLCFGEVIPTNPAIETIIEYSHRIVSGLVGAMIIILAIWAWKQLKHMREAKALSFAAVILIIFQGLLGAGAVVFGQSKAILALHFGISAMSLAAVVLLTILAFEDGREHTMAPKVSRGFKYYVFFVITYCYAVIYSGAYVKHSEATLACAGFPLCNGQIFPGLYGPVGAHYFHRVVGTILLLFLLILMIWTLSRYRHYRVLTWTAVLSFLLVVGQFISGISIVFTQNALSVGLIHALIISILFSALSYMTMIITRPSH.

Residues 1-6 lie on the Cytoplasmic side of the membrane; that stretch reads MHKRLK. The chain crosses the membrane as a helical span at residues 7-27; that stretch reads IYSVITSIGVLIVLLQGALVT. The Extracellular portion of the chain corresponds to 28–62; the sequence is KTGSGEGCGATWPLCFGEVIPTNPAIETIIEYSHR. Cysteine 35 and cysteine 42 are joined by a disulfide. Glutamate 58 is a catalytic residue. Histidine 61 contributes to the heme o binding site. Residues 63 to 83 form a helical membrane-spanning segment; it reads IVSGLVGAMIIILAIWAWKQL. The Cytoplasmic segment spans residues 84–93; that stretch reads KHMREAKALS. Residues 94-114 form a helical membrane-spanning segment; sequence FAAVILIIFQGLLGAGAVVFG. The Extracellular segment spans residues 115–118; it reads QSKA. Residues 119–139 traverse the membrane as a helical segment; the sequence is ILALHFGISAMSLAAVVLLTI. Histidine 123 lines the heme o pocket. Residues 140–156 are Cytoplasmic-facing; it reads LAFEDGREHTMAPKVSR. The helical transmembrane segment at 157-177 threads the bilayer; the sequence is GFKYYVFFVITYCYAVIYSGA. Residues 178–210 lie on the Extracellular side of the membrane; it reads YVKHSEATLACAGFPLCNGQIFPGLYGPVGAHY. A disulfide bond links cysteine 188 and cysteine 194. A helical membrane pass occupies residues 211-231; sequence FHRVVGTILLLFLLILMIWTL. Histidine 212 lines the heme b pocket. Over 232–242 the chain is Cytoplasmic; the sequence is SRYRHYRVLTW. A helical transmembrane segment spans residues 243 to 263; sequence TAVLSFLLVVGQFISGISIVF. Over 264 to 271 the chain is Extracellular; the sequence is TQNALSVG. A helical membrane pass occupies residues 272-292; sequence LIHALIISILFSALSYMTMII. Residue histidine 274 coordinates heme b. Over 293-297 the chain is Cytoplasmic; sequence TRPSH.

The protein belongs to the COX15/CtaA family. Type 1 subfamily. As to quaternary structure, interacts with CtaB. Heme b is required as a cofactor.

The protein localises to the cell membrane. The catalysed reaction is Fe(II)-heme o + 2 A + H2O = Fe(II)-heme a + 2 AH2. It participates in porphyrin-containing compound metabolism; heme A biosynthesis; heme A from heme O: step 1/1. Its function is as follows. Catalyzes the conversion of heme O to heme A by two successive hydroxylations of the methyl group at C8. The first hydroxylation forms heme I, the second hydroxylation results in an unstable dihydroxymethyl group, which spontaneously dehydrates, resulting in the formyl group of heme A. This Alkalihalophilus pseudofirmus (strain ATCC BAA-2126 / JCM 17055 / OF4) (Bacillus pseudofirmus) protein is Heme A synthase.